A 423-amino-acid polypeptide reads, in one-letter code: MLNKAGIAEPSLWTRADAMKVHTDDPTATMPTIDYDFPVMTDKYWVWDTWPLRDINGQVVSFQGWSVIFALVADRTKYGWHNRNDGARIGYFYSRGGSNWIFGGHLLKDGANPRSWEWSGCTIMAPGTANSVEVFFTSVNDTPSESVPAQCKGYIYADDKSVWFDGFDKVTDLFQADGLYYADYAENNFWDFRDPHVFINPEDGKTYALFEGNVAMERGTVAVGEEEIGPVPPKTETPDGARYCAAAIGIAQALNEARTEWKLLPPLVTAFGVNDQTERPHVVFQNGLTYLFTISHHSTYADGLSGPDGVYGFVSENGIFGPYEPLNGSGLVLGNPSSQPYQAYSHYVMTNGLVTSFIDTIPSSDPNVYRYGGTLAPTIKLELVGHRSFVTEVKGYGYIPPQIEWLAEDESSNSAAALSLLNK.

Residues Trp47, Asp48, Ser119, Arg193, and Asp194 each contribute to the sucrose site. Asp48 acts as the Nucleophile in catalysis. Glu278 (proton donor/acceptor) is an active-site residue.

The protein belongs to the glycosyl hydrolase 68 family.

It is found in the secreted. It catalyses the reaction [6)-beta-D-fructofuranosyl-(2-&gt;](n) alpha-D-glucopyranoside + sucrose = [6)-beta-D-fructofuranosyl-(2-&gt;](n+1) alpha-D-glucopyranoside + D-glucose. Functionally, catalyzes the synthesis of levan, a fructose polymer, by transferring the fructosyl moiety from sucrose to a growing acceptor molecule. This Zymomonas mobilis subsp. mobilis (strain ATCC 10988 / DSM 424 / LMG 404 / NCIMB 8938 / NRRL B-806 / ZM1) protein is Levansucrase.